Here is a 176-residue protein sequence, read N- to C-terminus: MAEEMIPAWVEGVLQPVEKLEAHRKGLRHLAISVFVTRGNKVLLQQRALSKYHTPGLWANTCCTHPYWGEDAPTCAARRLGQELGIVGLKLRHMGQLEYRADVNNGMIEHEVVEVFTAEAPEGIEPQPDPEEVADTEWVRIDALRSEIHANPERFTPWLKIYIEQHRDMIFPPVTA.

The Mn(2+) site is built by histidine 23 and histidine 29. A Nudix hydrolase domain is found at 27–161 (LRHLAISVFV…PERFTPWLKI (135 aa)). Residue cysteine 63 is part of the active site. Cysteine 63 is a Mg(2+) binding site. Residue histidine 65 participates in Mn(2+) binding. Residue glutamate 83 coordinates Mg(2+). Residues glutamate 109 and glutamate 111 each contribute to the Mn(2+) site. The active site involves glutamate 111.

This sequence belongs to the IPP isomerase type 1 family. Requires Mg(2+) as cofactor. Mn(2+) serves as cofactor.

The protein localises to the cytoplasm. The catalysed reaction is isopentenyl diphosphate = dimethylallyl diphosphate. Its pathway is isoprenoid biosynthesis; dimethylallyl diphosphate biosynthesis; dimethylallyl diphosphate from isopentenyl diphosphate: step 1/1. The protein operates within porphyrin-containing compound metabolism; chlorophyll biosynthesis. In terms of biological role, catalyzes the 1,3-allylic rearrangement of the homoallylic substrate isopentenyl (IPP) to its highly electrophilic allylic isomer, dimethylallyl diphosphate (DMAPP). The sequence is that of Isopentenyl-diphosphate Delta-isomerase from Rhodobacter capsulatus (strain ATCC BAA-309 / NBRC 16581 / SB1003).